Consider the following 200-residue polypeptide: Male-specific histamine-binding salivary protein (200 aa).

Positions 1–18 are cleaved as a signal peptide; sequence MKVLLLVLGAALCQNADA. Positions 37, 41, 56, and 59 each coordinate histamine. Intrachain disulfides connect cysteine 65–cysteine 193 and cysteine 137–cysteine 169. An N-linked (GlcNAc...) asparagine glycan is attached at asparagine 79. Histamine is bound by residues glutamate 97, tyrosine 115, phenylalanine 125, aspartate 138, glutamate 154, and tryptophan 156.

Belongs to the calycin superfamily. Histamine-binding salivary protein family. As to quaternary structure, homodimer; disulcde-linked. In terms of processing, N-glycosylated. In terms of tissue distribution, expressed in salivary glands.

The protein resides in the secreted. In terms of biological role, salivary tick protein that acts by scavenging histamine at the wound site, outcompeting histamine receptors for histamine, thereby overcoming host inflammatory responses. Binds histamine with a high-affinity (Kd=1.2 nM). Contains two binding histamine sites (H and L), that appear to bind histamine with differing affinities. This is Male-specific histamine-binding salivary protein from Rhipicephalus appendiculatus (Brown ear tick).